Reading from the N-terminus, the 166-residue chain is Small ribosomal subunit protein uS5 (166 aa).

Positions 11–74 constitute an S5 DRBM domain; the sequence is LQEKLISVNR…DKARKNMIII (64 aa).

Belongs to the universal ribosomal protein uS5 family. In terms of assembly, part of the 30S ribosomal subunit. Contacts proteins S4 and S8.

Functionally, with S4 and S12 plays an important role in translational accuracy. Located at the back of the 30S subunit body where it stabilizes the conformation of the head with respect to the body. This Wigglesworthia glossinidia brevipalpis protein is Small ribosomal subunit protein uS5.